A 121-amino-acid polypeptide reads, in one-letter code: MRKNSIKNIRINEEVMRELSNIIRGEIKDPRINPMTSVVAVEVAPDLKTAKAYISVLGDKKSQADTLAGLKSAEGYIRRTLAKNINLRNTPAITFIIDQSIEYGVEMSKKIDEVTKNLKED.

Belongs to the RbfA family. As to quaternary structure, monomer. Binds 30S ribosomal subunits, but not 50S ribosomal subunits or 70S ribosomes.

It is found in the cytoplasm. Its function is as follows. One of several proteins that assist in the late maturation steps of the functional core of the 30S ribosomal subunit. Associates with free 30S ribosomal subunits (but not with 30S subunits that are part of 70S ribosomes or polysomes). Required for efficient processing of 16S rRNA. May interact with the 5'-terminal helix region of 16S rRNA. The sequence is that of Ribosome-binding factor A from Agathobacter rectalis (strain ATCC 33656 / DSM 3377 / JCM 17463 / KCTC 5835 / VPI 0990) (Eubacterium rectale).